A 370-amino-acid polypeptide reads, in one-letter code: MNFEVLYQDNNARCGVFNFNQEIIETPVFMPVGTYGAVKSISTEEIKNTGSRIILSNAFHLYFRPGLEIIKLHGNLHNFMNWSGPILTDSGGFQVFSLSRFCKVNEEGVIFQNHIDGKKTFLTPKISMKIQSDLGSNIVMIFDQCIEYNQNWEKTKNAMERSLYWAKKSRIYFDSYKNKNSLFGIIHGGIYPSLRDISLQELIKIDFDGYALGGLAVGEPKIEMYKLLDHICPQIPKNKPRYLMGVGKPEDLIEGVRRGVDMFDCVIPTRNARNGHLFVTNGVIKIRNKKYKKDLSCLDKTCVCYTCRYYSRSYLHHLDACNEILGARLNTIHNLHYYQTLMSNIRNSIKNNTFEQFSLNFYKQKNKIDF.

Aspartate 89 serves as the catalytic Proton acceptor. Residues aspartate 89 to phenylalanine 93, aspartate 143, and glycine 214 each bind substrate. Residues glycine 245–aspartate 251 form an RNA binding region. Aspartate 264 acts as the Nucleophile in catalysis. The tract at residues threonine 269–arginine 273 is RNA binding; important for wobble base 34 recognition. 4 residues coordinate Zn(2+): cysteine 302, cysteine 304, cysteine 307, and histidine 333.

Belongs to the queuine tRNA-ribosyltransferase family. As to quaternary structure, homodimer. Within each dimer, one monomer is responsible for RNA recognition and catalysis, while the other monomer binds to the replacement base PreQ1. Zn(2+) is required as a cofactor.

The catalysed reaction is 7-aminomethyl-7-carbaguanine + guanosine(34) in tRNA = 7-aminomethyl-7-carbaguanosine(34) in tRNA + guanine. Its pathway is tRNA modification; tRNA-queuosine biosynthesis. In terms of biological role, catalyzes the base-exchange of a guanine (G) residue with the queuine precursor 7-aminomethyl-7-deazaguanine (PreQ1) at position 34 (anticodon wobble position) in tRNAs with GU(N) anticodons (tRNA-Asp, -Asn, -His and -Tyr). Catalysis occurs through a double-displacement mechanism. The nucleophile active site attacks the C1' of nucleotide 34 to detach the guanine base from the RNA, forming a covalent enzyme-RNA intermediate. The proton acceptor active site deprotonates the incoming PreQ1, allowing a nucleophilic attack on the C1' of the ribose to form the product. After dissociation, two additional enzymatic reactions on the tRNA convert PreQ1 to queuine (Q), resulting in the hypermodified nucleoside queuosine (7-(((4,5-cis-dihydroxy-2-cyclopenten-1-yl)amino)methyl)-7-deazaguanosine). The protein is Queuine tRNA-ribosyltransferase of Buchnera aphidicola subsp. Acyrthosiphon pisum (strain 5A).